The sequence spans 81 residues: ATP synthase subunit c (81 aa).

Transmembrane regions (helical) follow at residues 7–27 and 57–77; these read AASV…PGLG and LAFM…LLFA.

The protein belongs to the ATPase C chain family. F-type ATPases have 2 components, F(1) - the catalytic core - and F(0) - the membrane proton channel. F(1) has five subunits: alpha(3), beta(3), gamma(1), delta(1), epsilon(1). F(0) has four main subunits: a(1), b(1), b'(1) and c(10-14). The alpha and beta chains form an alternating ring which encloses part of the gamma chain. F(1) is attached to F(0) by a central stalk formed by the gamma and epsilon chains, while a peripheral stalk is formed by the delta, b and b' chains.

Its subcellular location is the cellular thylakoid membrane. F(1)F(0) ATP synthase produces ATP from ADP in the presence of a proton or sodium gradient. F-type ATPases consist of two structural domains, F(1) containing the extramembraneous catalytic core and F(0) containing the membrane proton channel, linked together by a central stalk and a peripheral stalk. During catalysis, ATP synthesis in the catalytic domain of F(1) is coupled via a rotary mechanism of the central stalk subunits to proton translocation. Its function is as follows. Key component of the F(0) channel; it plays a direct role in translocation across the membrane. A homomeric c-ring of between 10-14 subunits forms the central stalk rotor element with the F(1) delta and epsilon subunits. This chain is ATP synthase subunit c, found in Synechococcus sp. (strain JA-3-3Ab) (Cyanobacteria bacterium Yellowstone A-Prime).